A 206-amino-acid chain; its full sequence is Probable GTP-binding protein EngB (206 aa).

Residues 29–201 (ILPEVAVVGR…MIMIQDALND (173 aa)) form the EngB-type G domain. Residues 37-44 (GRSNVGKS), 64-68 (GKTQA), 82-85 (DLPG), 149-152 (TKID), and 180-182 (YSV) contribute to the GTP site. Residues serine 44 and threonine 66 each coordinate Mg(2+).

The protein belongs to the TRAFAC class TrmE-Era-EngA-EngB-Septin-like GTPase superfamily. EngB GTPase family. It depends on Mg(2+) as a cofactor.

Necessary for normal cell division and for the maintenance of normal septation. The protein is Probable GTP-binding protein EngB of Protochlamydia amoebophila (strain UWE25).